A 490-amino-acid chain; its full sequence is Probable malate:quinone oxidoreductase (490 aa).

It belongs to the MQO family. The cofactor is FAD.

It catalyses the reaction (S)-malate + a quinone = a quinol + oxaloacetate. Its pathway is carbohydrate metabolism; tricarboxylic acid cycle; oxaloacetate from (S)-malate (quinone route): step 1/1. This Corynebacterium jeikeium (strain K411) protein is Probable malate:quinone oxidoreductase.